A 151-amino-acid polypeptide reads, in one-letter code: MSEEQQTQPQLALERLYTKDISFEVPGPQVFTKQWQPELNINLSSSAEKIDPTHFEVSLKVVVQANNEGETAFIVDVTQSGIFLIDNIEEDRLPYILGAYCPNILFPFLREAVNDMVTKGSFPQLLLTPINFDAEFEANLERAQTAVEGQA.

It belongs to the SecB family. As to quaternary structure, homotetramer, a dimer of dimers. One homotetramer interacts with 1 SecA dimer.

The protein localises to the cytoplasm. In terms of biological role, one of the proteins required for the normal export of preproteins out of the cell cytoplasm. It is a molecular chaperone that binds to a subset of precursor proteins, maintaining them in a translocation-competent state. It also specifically binds to its receptor SecA. The chain is Protein-export protein SecB from Acinetobacter baylyi (strain ATCC 33305 / BD413 / ADP1).